The primary structure comprises 98 residues: Integration host factor subunit alpha (98 aa).

The tract at residues 49–71 (FGNFDLRDKNQRPGRNPKTGEDI) is disordered.

The protein belongs to the bacterial histone-like protein family. In terms of assembly, heterodimer of an alpha and a beta chain.

Functionally, this protein is one of the two subunits of integration host factor, a specific DNA-binding protein that functions in genetic recombination as well as in transcriptional and translational control. This Shewanella sp. (strain ANA-3) protein is Integration host factor subunit alpha.